Consider the following 187-residue polypeptide: Putative lipoprotein LppJ (187 aa).

The first 28 residues, 1 to 28, serve as a signal peptide directing secretion; the sequence is MPHSTADRRLRLTRQALLAAAVAPLLAG. Residue cysteine 29 is the site of N-palmitoyl cysteine attachment. Residue cysteine 29 is the site of S-diacylglycerol cysteine attachment.

Its subcellular location is the cell membrane. The polypeptide is Putative lipoprotein LppJ (lppJ) (Mycobacterium bovis (strain ATCC BAA-935 / AF2122/97)).